The primary structure comprises 135 residues: Transcription antitermination protein NusB (135 aa).

The protein belongs to the NusB family.

Functionally, involved in transcription antitermination. Required for transcription of ribosomal RNA (rRNA) genes. Binds specifically to the boxA antiterminator sequence of the ribosomal RNA (rrn) operons. This chain is Transcription antitermination protein NusB, found in Shewanella halifaxensis (strain HAW-EB4).